A 469-amino-acid chain; its full sequence is tRNA(Ile)-lysidine synthase (469 aa).

Position 26-31 (26-31 (SGGPDS)) interacts with ATP.

The protein belongs to the tRNA(Ile)-lysidine synthase family.

The protein resides in the cytoplasm. It carries out the reaction cytidine(34) in tRNA(Ile2) + L-lysine + ATP = lysidine(34) in tRNA(Ile2) + AMP + diphosphate + H(+). Functionally, ligates lysine onto the cytidine present at position 34 of the AUA codon-specific tRNA(Ile) that contains the anticodon CAU, in an ATP-dependent manner. Cytidine is converted to lysidine, thus changing the amino acid specificity of the tRNA from methionine to isoleucine. The sequence is that of tRNA(Ile)-lysidine synthase from Clostridium perfringens (strain 13 / Type A).